Reading from the N-terminus, the 270-residue chain is Catechol 1,2-dioxygenase (270 aa).

4 residues coordinate Fe cation: Y152, Y186, H210, and H212.

Belongs to the intradiol ring-cleavage dioxygenase family. It depends on Fe(3+) as a cofactor.

The catalysed reaction is catechol + O2 = cis,cis-muconate + 2 H(+). The protein is Catechol 1,2-dioxygenase (catA) of Rhodococcus opacus (Nocardia opaca).